The following is a 543-amino-acid chain: CTP synthase (543 aa).

Residues 1-267 (MTKYVFVTGG…ATQVLNLLNL (267 aa)) are amidoligase domain. A CTP-binding site is contributed by serine 13. Serine 13 serves as a coordination point for UTP. Residues 14-19 (SIGKGI) and aspartate 71 each bind ATP. The Mg(2+) site is built by aspartate 71 and glutamate 141. Residues 148–150 (DIE), 188–193 (KTKPTQ), and lysine 224 contribute to the CTP site. Residues 188-193 (KTKPTQ) and lysine 224 contribute to the UTP site. Residues 292–534 (EVAIVGKYVR…LAAAAKNSNR (243 aa)) form the Glutamine amidotransferase type-1 domain. Glycine 354 provides a ligand contact to L-glutamine. Cysteine 381 (nucleophile; for glutamine hydrolysis) is an active-site residue. L-glutamine is bound by residues 382–385 (LGMQ), glutamate 405, and arginine 462. Residues histidine 507 and glutamate 509 contribute to the active site.

It belongs to the CTP synthase family. In terms of assembly, homotetramer.

The enzyme catalyses UTP + L-glutamine + ATP + H2O = CTP + L-glutamate + ADP + phosphate + 2 H(+). It carries out the reaction L-glutamine + H2O = L-glutamate + NH4(+). It catalyses the reaction UTP + NH4(+) + ATP = CTP + ADP + phosphate + 2 H(+). It functions in the pathway pyrimidine metabolism; CTP biosynthesis via de novo pathway; CTP from UDP: step 2/2. Its activity is regulated as follows. Allosterically activated by GTP, when glutamine is the substrate; GTP has no effect on the reaction when ammonia is the substrate. The allosteric effector GTP functions by stabilizing the protein conformation that binds the tetrahedral intermediate(s) formed during glutamine hydrolysis. Inhibited by the product CTP, via allosteric rather than competitive inhibition. Catalyzes the ATP-dependent amination of UTP to CTP with either L-glutamine or ammonia as the source of nitrogen. Regulates intracellular CTP levels through interactions with the four ribonucleotide triphosphates. This chain is CTP synthase, found in Thermosynechococcus vestitus (strain NIES-2133 / IAM M-273 / BP-1).